The sequence spans 278 residues: Phosphatidylglycerol--prolipoprotein diacylglyceryl transferase (278 aa).

A run of 3 helical transmembrane segments spans residues 13 to 33 (LFGIPVYWYAIIIVSGIALAV), 50 to 70 (VFDFMLWGLPAAIVGARLYYV), and 89 to 109 (NGGLAIYGGLIGGGLALFFFT). Arg135 contributes to the a 1,2-diacyl-sn-glycero-3-phospho-(1'-sn-glycerol) binding site. The next 3 helical transmembrane spans lie at 175-195 (QPTFLYESVWNVLGFIVLVLL), 205-225 (GEVFLGYIIWYSFGRFFIEGL), and 236-256 (IRVSQLLSLVMFVAAIVIVIV).

Belongs to the Lgt family.

Its subcellular location is the cell membrane. The enzyme catalyses L-cysteinyl-[prolipoprotein] + a 1,2-diacyl-sn-glycero-3-phospho-(1'-sn-glycerol) = an S-1,2-diacyl-sn-glyceryl-L-cysteinyl-[prolipoprotein] + sn-glycerol 1-phosphate + H(+). It functions in the pathway protein modification; lipoprotein biosynthesis (diacylglyceryl transfer). In terms of biological role, catalyzes the transfer of the diacylglyceryl group from phosphatidylglycerol to the sulfhydryl group of the N-terminal cysteine of a prolipoprotein, the first step in the formation of mature lipoproteins. The sequence is that of Phosphatidylglycerol--prolipoprotein diacylglyceryl transferase from Enterococcus faecalis (strain ATCC 700802 / V583).